Reading from the N-terminus, the 563-residue chain is Arginine--tRNA ligase (563 aa).

Residues 121–131 (PNIAKPFSIGH) carry the 'HIGH' region motif.

This sequence belongs to the class-I aminoacyl-tRNA synthetase family. As to quaternary structure, monomer.

The protein resides in the cytoplasm. The enzyme catalyses tRNA(Arg) + L-arginine + ATP = L-arginyl-tRNA(Arg) + AMP + diphosphate. This chain is Arginine--tRNA ligase, found in Streptococcus agalactiae serotype Ia (strain ATCC 27591 / A909 / CDC SS700).